Reading from the N-terminus, the 260-residue chain is Indole-3-glycerol phosphate synthase (260 aa).

It belongs to the TrpC family.

It catalyses the reaction 1-(2-carboxyphenylamino)-1-deoxy-D-ribulose 5-phosphate + H(+) = (1S,2R)-1-C-(indol-3-yl)glycerol 3-phosphate + CO2 + H2O. It participates in amino-acid biosynthesis; L-tryptophan biosynthesis; L-tryptophan from chorismate: step 4/5. In Staphylococcus aureus (strain Mu3 / ATCC 700698), this protein is Indole-3-glycerol phosphate synthase.